A 155-amino-acid polypeptide reads, in one-letter code: RNA pyrophosphohydrolase (155 aa).

The region spanning 5–147 is the Nudix hydrolase domain; the sequence is KYRPNVAAII…KRQVYRQVIA (143 aa). Positions 42-63 match the Nudix box motif; that stretch reads GGIDEGETPLEALHRELLEEIG.

The protein belongs to the Nudix hydrolase family. RppH subfamily. It depends on a divalent metal cation as a cofactor.

In terms of biological role, accelerates the degradation of transcripts by removing pyrophosphate from the 5'-end of triphosphorylated RNA, leading to a more labile monophosphorylated state that can stimulate subsequent ribonuclease cleavage. In Helicobacter pylori (strain G27), this protein is RNA pyrophosphohydrolase.